The following is a 348-amino-acid chain: Putative methylesterase 14, chloroplastic (348 aa).

Disordered regions lie at residues methionine 1 to serine 29 and glycine 60 to phenylalanine 80. The transit peptide at methionine 1–leucine 76 directs the protein to the chloroplast. The residue at position 77 (serine 77) is a Phosphoserine. The active-site Acyl-ester intermediate is serine 172. Active-site charge relay system residues include aspartate 299 and histidine 327.

This sequence belongs to the AB hydrolase superfamily. Methylesterase family.

The protein localises to the plastid. Its subcellular location is the chloroplast. Its function is as follows. Putative methylesterase. This Arabidopsis thaliana (Mouse-ear cress) protein is Putative methylesterase 14, chloroplastic.